A 1097-amino-acid polypeptide reads, in one-letter code: DNA-directed RNA polymerase subunit beta (1097 aa).

The segment at D1073–D1097 is disordered. Residues R1077 to T1091 are compositionally biased toward polar residues.

The protein belongs to the RNA polymerase beta chain family. In terms of assembly, in cyanobacteria the RNAP catalytic core is composed of 2 alpha, 1 beta, 1 beta', 1 gamma and 1 omega subunit. When a sigma factor is associated with the core the holoenzyme is formed, which can initiate transcription.

The catalysed reaction is RNA(n) + a ribonucleoside 5'-triphosphate = RNA(n+1) + diphosphate. DNA-dependent RNA polymerase catalyzes the transcription of DNA into RNA using the four ribonucleoside triphosphates as substrates. This is DNA-directed RNA polymerase subunit beta from Prochlorococcus marinus (strain MIT 9312).